A 603-amino-acid polypeptide reads, in one-letter code: Sulfoacetaldehyde acetyltransferase (603 aa).

This sequence belongs to the TPP enzyme family. It depends on Mg(2+) as a cofactor. The cofactor is thiamine diphosphate.

It catalyses the reaction acetyl phosphate + sulfite + H(+) = sulfoacetaldehyde + phosphate. In terms of biological role, catalyzes the degradation of sulfoacetaldehyde into sulfite and acetyl phosphate. Involved in sulfolactate degradation. The polypeptide is Sulfoacetaldehyde acetyltransferase (Roseovarius nubinhibens (strain ATCC BAA-591 / DSM 15170 / ISM)).